We begin with the raw amino-acid sequence, 181 residues long: Probable pyruvoyl-dependent arginine decarboxylase (181 aa).

A Pyruvic acid (Ser) modification is found at Ser43.

The protein belongs to the PdaD family. The cofactor is pyruvate.

It catalyses the reaction L-arginine + H(+) = agmatine + CO2. This is Probable pyruvoyl-dependent arginine decarboxylase from Prosthecochloris aestuarii (strain DSM 271 / SK 413).